The chain runs to 689 residues: Methionine--tRNA ligase (689 aa).

The short motif at 19-29 (PYPTGDLHIGH) is the 'HIGH' region element. Positions 150, 153, 162, and 166 each coordinate Zn(2+). The 'KMSKS' region signature appears at 338 to 342 (GLSTS). T341 is a binding site for ATP. The region spanning 591-689 (EFQALDLRVG…EDSEPGTKVM (99 aa)) is the tRNA-binding domain.

The protein belongs to the class-I aminoacyl-tRNA synthetase family. MetG type 1 subfamily. In terms of assembly, homodimer. It depends on Zn(2+) as a cofactor.

Its subcellular location is the cytoplasm. The catalysed reaction is tRNA(Met) + L-methionine + ATP = L-methionyl-tRNA(Met) + AMP + diphosphate. In terms of biological role, is required not only for elongation of protein synthesis but also for the initiation of all mRNA translation through initiator tRNA(fMet) aminoacylation. In Halobacterium salinarum (strain ATCC 700922 / JCM 11081 / NRC-1) (Halobacterium halobium), this protein is Methionine--tRNA ligase.